Reading from the N-terminus, the 2293-residue chain is Protein Ycf2 A (2293 aa).

Glycine 1647–serine 1654 lines the ATP pocket.

Belongs to the Ycf2 family.

It is found in the plastid. Its subcellular location is the chloroplast stroma. Probable ATPase of unknown function. Its presence in a non-photosynthetic plant (Epifagus virginiana) and experiments in tobacco indicate that it has an essential function which is probably not related to photosynthesis. The chain is Protein Ycf2 A from Crucihimalaya wallichii (Rock-cress).